We begin with the raw amino-acid sequence, 157 residues long: Ubiquitin-like protein 4A (157 aa).

The Ubiquitin-like domain maps to 1-76 (MQLTVKALQG…LNLVVKPLEK (76 aa)). Residue Lys48 forms a Glycyl lysine isopeptide (Lys-Gly) (interchain with G-Cter in ubiquitin) linkage. Ser90 bears the Phosphoserine mark. A required and sufficient for interaction with BAG6 region spans residues 96–138 (WQLISKVLARHFSVADASRVLEQLQRDYDRSLSRLTLDDIERL).

Component of the BAG6/BAT3 complex, at least composed of BAG6, UBL4A and GET4/TRC35. Interacts with BAG6; the interaction is direct and required for UBL4A protein stability. Interacts with USP13; may be indirect via BAG6. Post-translationally, polyubiquitinated. Ubiquitination by AMFR and deubiquitination by USP13 may regulate the interaction between the BAG6/BAT3 complex and SGTA and therefore may regulate client proteins fate.

The protein resides in the cytoplasm. Its subcellular location is the cytosol. It is found in the nucleus. Functionally, as part of a cytosolic protein quality control complex, the BAG6/BAT3 complex, maintains misfolded and hydrophobic patches-containing proteins in a soluble state and participates in their proper delivery to the endoplasmic reticulum or alternatively can promote their sorting to the proteasome where they undergo degradation. The BAG6/BAT3 complex is involved in the post-translational delivery of tail-anchored/type II transmembrane proteins to the endoplasmic reticulum membrane. Recruited to ribosomes, it interacts with the transmembrane region of newly synthesized tail-anchored proteins and together with SGTA and ASNA1 mediates their delivery to the endoplasmic reticulum. Client proteins that cannot be properly delivered to the endoplasmic reticulum are ubiquitinated and sorted to the proteasome. Similarly, the BAG6/BAT3 complex also functions as a sorting platform for proteins of the secretory pathway that are mislocalized to the cytosol either delivering them to the proteasome for degradation or to the endoplasmic reticulum. The BAG6/BAT3 complex also plays a role in the endoplasmic reticulum-associated degradation (ERAD), a quality control mechanism that eliminates unwanted proteins of the endoplasmic reticulum through their retrotranslocation to the cytosol and their targeting to the proteasome. It maintains these retrotranslocated proteins in an unfolded yet soluble state condition in the cytosol to ensure their proper delivery to the proteasome. The sequence is that of Ubiquitin-like protein 4A from Mus musculus (Mouse).